The primary structure comprises 282 residues: Large ribosomal subunit protein uL4c (282 aa).

The transit peptide at 1-43 directs the protein to the chloroplast; that stretch reads MAASLSFFSSSIFLSNPNIQSSKHLLFRSPKQLSVAAIATIRS. 2 disordered regions span residues 86–133 and 251–282; these read RNQR…GGVV and RYGD…ESSE. A compositionally biased stretch (acidic residues) spans 255–282; that stretch reads ENEWEDEEEDDQEDNDGGEAEESTESSE.

Belongs to the universal ribosomal protein uL4 family. As to quaternary structure, part of the 50S ribosomal subunit.

Its subcellular location is the plastid. The protein localises to the chloroplast. In terms of biological role, this protein binds directly and specifically to 23S rRNA. May play a role in plastid transcriptional regulation. This is Large ribosomal subunit protein uL4c (RPL4) from Nicotiana tabacum (Common tobacco).